A 1896-amino-acid chain; its full sequence is MPLPPRSLQVLLLLLLLLLLLPGMWAEAGLPRAGGGSQPPFRTFSASDWGLTHLVVHEQTGEVYVGAVNRIYKLSGNLTLLRAHVTGPVEDNEKCYPPPSVQSCPHGLGSTDNVNKLLLLDYAANRLLACGSASQGICQFLRLDDLFKLGEPHHRKEHYLSSVQEAGSMAGVLIAGPPGQGQAKLFVGTPIDGKSEYFPTLSSRRLMANEEDADMFGFVYQDEFVSSQLKIPSDTLSKFPAFDIYYVYSFRSEQFVYYLTLQLDTQLTSPDAAGEHFFTSKIVRLCVDDPKFYSYVEFPIGCEQAGVEYRLVQDAYLSRPGRALAHQLGLAEDEDVLFTVFAQGQKNRVKPPKESALCLFTLRAIKEKIKERIQSCYRGEGKLSLPWLLNKELGCINSPLQIDDDFCGQDFNQPLGGTVTIEGTPLFVDKDDGLTAVAAYDYRGRTVVFAGTRSGRIRKILVDLSNPGGRPALAYESVVAQEGSPILRDLVLSPNHQYLYAMTEKQVTRVPVESCVQYTSCELCLGSRDPHCGWCVLHSICSRRDACERADEPQRFAADLLQCVQLTVQPRNVSVTMSQVPLVLQAWNVPDLSAGVNCSFEDFTESESVLEDGRIHCRSPSAREVAPITRGQGDQRVVKLYLKSKETGKKFASVDFVFYNCSVHQSCLSCVNGSFPCHWCKYRHVCTHNVADCAFLEGRVNVSEDCPQILPSTQIYVPVGVVKPITLAARNLPQPQSGQRGYECLFHIPGSPARVTALRFNSSSLQCQNSSYSYEGNDVSDLPVNLSVVWNGNFVIDNPQNIQAHLYKCPALRESCGLCLKADPRFECGWCVAERRCSLRHHCAADTPASWMHARHGSSRCTDPKILKLSPETGPRQGGTRLTITGENLGLRFEDVRLGVRVGKVLCSPVESEYISAEQIVCEIGDASSVRAHDALVEVCVRDCSPHYRALSPKRFTFVTPTFYRVSPSRGPLSGGTWIGIEGSHLNAGSDVAVSVGGRPCSFSWRNSREIRCLTPPGQSPGSAPIIININRAQLTNPEVKYNYTEDPTILRIDPEWSINSGGTLLTVTGTNLATVREPRIRAKYGGIERENGCLVYNDTTMVCRAPSVANPVRSPPELGERPDELGFVMDNVRSLLVLNSTSFLYYPDPVLEPLSPTGLLELKPSSPLILKGRNLLPPAPGNSRLNYTVLIGSTPCTLTVSETQLLCEAPNLTGQHKVTVRAGGFEFSPGTLQVYSDSLLTLPAIVGIGGGGGLLLLVIVAVLIAYKRKSRDADRTLKRLQLQMDNLESRVALECKEAFAELQTDIHELTNDLDGAGIPFLDYRTYAMRVLFPGIEDHPVLKEMEVQANVEKSLTLFGQLLTKKHFLLTFIRTLEAQRSFSMRDRGNVASLIMTALQGEMEYATGVLKQLLSDLIEKNLESKNHPKLLLRRTESVAEKMLTNWFTFLLYKFLKECAGEPLFMLYCAIKQQMEKGPIDAITGEARYSLSEDKLIRQQIDYKTLTLNCVNPENENAPEVPVKGLDCDTVTQAKEKLLDAAYKGVPYSQRPKAADMDLEWRQGRMARIILQDEDVTTKIDNDWKRLNTLAHYQVTDGSSVALVPKQTSAYNISNSSTFTKSLSRYESMLRTASSPDSLRSRTPMITPDLESGTKLWHLVKNHDHLDQREGDRGSKMVSEIYLTRLLATKGTLQKFVDDLFETIFSTAHRGSALPLAIKYMFDFLDEQADKHQIHDADVRHTWKSNCLPLRFWVNVIKNPQFVFDIHKNSITDACLSVVAQTFMDSCSTSEHKLGKDSPSNKLLYAKDIPNYKSWVERYYADIAKMPAISDQDMSAYLAEQSRLHLSQFNSMSALHEIYSYITKYKDEILAALEKDEQARRQRLRSKLEQVVDTMALSS.

The first 26 residues, 1-26 (MPLPPRSLQVLLLLLLLLLLLPGMWA), serve as a signal peptide directing secretion. Residues 27–512 (EAGLPRAGGG…TEKQVTRVPV (486 aa)) enclose the Sema domain. Residues 27–1244 (EAGLPRAGGG…VYSDSLLTLP (1218 aa)) lie on the Extracellular side of the membrane. Asn-77 is a glycosylation site (N-linked (GlcNAc...) asparagine). 10 disulfide bridges follow: Cys-95–Cys-104, Cys-130–Cys-138, Cys-286–Cys-407, Cys-302–Cys-358, Cys-376–Cys-395, Cys-515–Cys-532, Cys-521–Cys-563, Cys-524–Cys-541, Cys-535–Cys-547, and Cys-598–Cys-617. N-linked (GlcNAc...) asparagine glycans are attached at residues Asn-660, Asn-672, and Asn-701. 4 IPT/TIG domains span residues 864-959 (PKIL…FTFV), 961-1045 (PTFY…YNYT), 1048-1147 (PTIL…FLYY), and 1150-1236 (PVLE…LQVY). Residue Asn-1043 is glycosylated (N-linked (GlcNAc...) asparagine). Residues Asn-1187 and Asn-1212 are each glycosylated (N-linked (GlcNAc...) asparagine). The helical transmembrane segment at 1245–1265 (AIVGIGGGGGLLLLVIVAVLI) threads the bilayer. Positions 1264–1317 (LIAYKRKSRDADRTLKRLQLQMDNLESRVALECKEAFAELQTDIHELTNDLDGA) form a coiled coil. Residues 1266–1896 (AYKRKSRDAD…QVVDTMALSS (631 aa)) lie on the Cytoplasmic side of the membrane.

The protein belongs to the plexin family. Interacts directly with NRP1 and NRP2. Interacts with PLXN1B. Interacts with FARP2, RND1 and KDR/VEGFR2. Binding of SEMA3A leads to dissociation of FARP2. Interacts with CRMP1, DPYSL2/CRMP2, DPYSL3/CRMP3 and DPYSL4/CRMP4. Interacts (via TIG domains) with TREM2; the interaction mediates SEMA6D binding and signaling through TYROBP. Detected in fetal brain, lung, liver and kidney.

The protein resides in the cell membrane. Coreceptor for SEMA3A, SEMA3C, SEMA3F and SEMA6D. Necessary for signaling by class 3 semaphorins and subsequent remodeling of the cytoskeleton. Plays a role in axon guidance, invasive growth and cell migration. Class 3 semaphorins bind to a complex composed of a neuropilin and a plexin. The plexin modulates the affinity of the complex for specific semaphorins, and its cytoplasmic domain is required for the activation of down-stream signaling events in the cytoplasm. Acts as coreceptor of TREM2 for SEMA6D in dendritic cells and is involved in the generation of immune responses and skeletal homeostasis. The chain is Plexin-A1 from Homo sapiens (Human).